A 304-amino-acid chain; its full sequence is Acetylxylan esterase A (304 aa).

The signal sequence occupies residues 1–24 (MLLSTHLLFVITTLVTSLLHPIDG). The Charge relay system role is filled by Ser148. Asn190 carries N-linked (GlcNAc...) asparagine glycosylation.

It belongs to the carbohydrate esterase 1 (CE1) family. AxeA subfamily. In terms of assembly, monomer.

It is found in the secreted. It carries out the reaction Deacetylation of xylans and xylo-oligosaccharides.. Its pathway is glycan degradation; xylan degradation. Its activity is regulated as follows. Inactivated by di-isopropylfluorophosphate and phenylmethylsulfonylfluorid (PMSF), a specific inhibitor of serine esterases. Its function is as follows. Acetylxylan esterase involved in the hydrolysis of xylan, a major structural heterogeneous polysaccharide found in plant biomass representing the second most abundant polysaccharide in the biosphere, after cellulose. Degrades acetylated xylans by cleaving acetyl side groups from the hetero-xylan backbone. This Aspergillus awamori (Black koji mold) protein is Acetylxylan esterase A (axeA).